The primary structure comprises 318 residues: Methionyl-tRNA formyltransferase (318 aa).

112 to 115 (SILP) contacts (6S)-5,6,7,8-tetrahydrofolate.

Belongs to the Fmt family.

It catalyses the reaction L-methionyl-tRNA(fMet) + (6R)-10-formyltetrahydrofolate = N-formyl-L-methionyl-tRNA(fMet) + (6S)-5,6,7,8-tetrahydrofolate + H(+). Attaches a formyl group to the free amino group of methionyl-tRNA(fMet). The formyl group appears to play a dual role in the initiator identity of N-formylmethionyl-tRNA by promoting its recognition by IF2 and preventing the misappropriation of this tRNA by the elongation apparatus. In Haemophilus influenzae (strain PittEE), this protein is Methionyl-tRNA formyltransferase.